A 231-amino-acid polypeptide reads, in one-letter code: GFP-like fluorescent chromoprotein FP538 (231 aa).

Phenylalanine amide; atypical is present on Phe65. Residues 66 to 68 (KYG) constitute a cross-link (2-tetrahydro-2-pyridyl-5-imidazolinone (Lys-Gly)). Tyr67 is subject to 2,3-didehydrotyrosine.

Belongs to the GFP family. Homotetramer. Contains a chromophore consisting of modified amino acid residues. The chromophore is formed by autocatalytic backbone condensation between Xaa-N and Gly-(N+2), and oxidation of Tyr-(N+1) to didehydrotyrosine. In addition, the residue N lysine undergoes cyclization. The alpha-amino nitrogen is replaced by the epsilon-amino nitrogen, the peptide chain is broken, residue N-1 is released as an amide, and a double bond is formed between the alpha-carbon and the nitrogen so that a tetrahydropyridine ring results. Maturation of the chromophore requires nothing other than molecular oxygen. Tentacle and oral disk.

Its function is as follows. Pigment protein that is yellow in color. The protein is GFP-like fluorescent chromoprotein FP538 of Zoanthus sp. (Green polyp).